The chain runs to 236 residues: Purine nucleoside phosphorylase DeoD-type (236 aa).

His-4 serves as a coordination point for a purine D-ribonucleoside. Phosphate-binding positions include Gly-20, Arg-24, Arg-43, and 87–90 (RVGT). A purine D-ribonucleoside is bound by residues 179 to 181 (EME) and 203 to 204 (SD). Asp-204 (proton donor) is an active-site residue.

The protein belongs to the PNP/UDP phosphorylase family. Homohexamer; trimer of homodimers.

The catalysed reaction is a purine D-ribonucleoside + phosphate = a purine nucleobase + alpha-D-ribose 1-phosphate. It catalyses the reaction a purine 2'-deoxy-D-ribonucleoside + phosphate = a purine nucleobase + 2-deoxy-alpha-D-ribose 1-phosphate. In terms of biological role, catalyzes the reversible phosphorolytic breakdown of the N-glycosidic bond in the beta-(deoxy)ribonucleoside molecules, with the formation of the corresponding free purine bases and pentose-1-phosphate. The polypeptide is Purine nucleoside phosphorylase DeoD-type (Streptococcus pneumoniae (strain JJA)).